We begin with the raw amino-acid sequence, 223 residues long: Ribosomal RNA small subunit methyltransferase G (223 aa).

Residues Gly85, Phe90, and Arg154 each coordinate S-adenosyl-L-methionine.

Belongs to the methyltransferase superfamily. RNA methyltransferase RsmG family.

The protein resides in the cytoplasm. It catalyses the reaction guanosine(527) in 16S rRNA + S-adenosyl-L-methionine = N(7)-methylguanosine(527) in 16S rRNA + S-adenosyl-L-homocysteine. Its function is as follows. Specifically methylates the N7 position of guanine in position 527 of 16S rRNA. The chain is Ribosomal RNA small subunit methyltransferase G from Rhodopseudomonas palustris (strain TIE-1).